The primary structure comprises 283 residues: uncharacterized protein (283 aa).

This is an uncharacterized protein from Caenorhabditis elegans.